The primary structure comprises 134 residues: 15.4 kDa class V heat shock protein (134 aa).

The sHSP domain occupies 19-126 (SLNNYQENHV…LIDPSDVPES (108 aa)).

The protein belongs to the small heat shock protein (HSP20) family. May form oligomeric structures.

The protein localises to the cytoplasm. This Arabidopsis thaliana (Mouse-ear cress) protein is 15.4 kDa class V heat shock protein (HSP15.4).